Consider the following 196-residue polypeptide: Golgi to ER traffic protein 1 (196 aa).

Residues 1 to 10 lie on the Lumenal side of the membrane; that stretch reads MFLDLHPYTI. The chain crosses the membrane as a helical span at residues 11–30; it reads LVSIFIILLVKQIVGRIGKS. Over 31 to 114 the chain is Cytoplasmic; it reads TIQEFVWLLY…SIDKLANVLL (84 aa). A coiled-coil region spans residues 76–114; sequence AKWTKLNRQADKLTSEIQKLNEEIRQSKASIDKLANVLL. A helical membrane pass occupies residues 115-135; that stretch reads MVLTTLPIWVARIFFRKTHLF. At 136-159 the chain is on the lumenal side; the sequence is YLRSGIFPRYIEWVLALPFFPSGA. A helical transmembrane segment spans residues 160 to 176; sequence VGLTVWMFAANSVIHNV. Topologically, residues 177–196 are cytoplasmic; the sequence is ISLVSFAFEKRVEKPVRQKK.

The protein belongs to the WRB/GET1 family. Component of the Golgi to ER traffic (GET) complex, which is composed of GET1, GET2 and GET3. Within the complex, GET1 and GET2 form a heterotetramer which is stabilized by phosphatidylinositol binding and which binds to the GET3 homodimer.

It is found in the endoplasmic reticulum membrane. The protein resides in the golgi apparatus membrane. Required for the post-translational delivery of tail-anchored (TA) proteins to the endoplasmic reticulum. Together with GET2, acts as a membrane receptor for soluble GET3, which recognizes and selectively binds the transmembrane domain of TA proteins in the cytosol. The GET complex cooperates with the HDEL receptor ERD2 to mediate the ATP-dependent retrieval of resident ER proteins that contain a C-terminal H-D-E-L retention signal from the Golgi to the ER. This Candida tropicalis (strain ATCC MYA-3404 / T1) (Yeast) protein is Golgi to ER traffic protein 1.